A 153-amino-acid chain; its full sequence is MYAVVRLRGQVNVRYTIEDTMKMLRLHKVNHCVFVPENPHYKGMVQKVKDYVAYGKIDAKTLAEVLENRGRLEGDTRLTEEYIRENTDYDSIQAFAEAVIEGKSSLKDIPKLKPVFRLHPPRKGHAGIKRTVQQGGVLGNHDENINVLLHKMR.

Belongs to the universal ribosomal protein uL30 family. In terms of assembly, part of the 50S ribosomal subunit.

This chain is Large ribosomal subunit protein uL30, found in Methanosarcina acetivorans (strain ATCC 35395 / DSM 2834 / JCM 12185 / C2A).